Consider the following 232-residue polypeptide: Orotidine 5'-phosphate decarboxylase (232 aa).

Residues Asp-13, Lys-35, 62-71 (DLKFHDIPNT), Thr-122, Arg-182, Gln-191, Gly-211, and Arg-212 contribute to the substrate site. Lys-64 acts as the Proton donor in catalysis.

It belongs to the OMP decarboxylase family. Type 1 subfamily. Homodimer.

The enzyme catalyses orotidine 5'-phosphate + H(+) = UMP + CO2. The protein operates within pyrimidine metabolism; UMP biosynthesis via de novo pathway; UMP from orotate: step 2/2. In terms of biological role, catalyzes the decarboxylation of orotidine 5'-monophosphate (OMP) to uridine 5'-monophosphate (UMP). This is Orotidine 5'-phosphate decarboxylase from Pseudomonas syringae pv. syringae (strain B728a).